The sequence spans 373 residues: MALNVAPVRDTKWLTLEVCRQYQRGTCSRSDEECKFAHPPKSCQVENGRVIACFDSLKGRCSRENCKYLHPPTHLKTQLEINGRNNLIQQKTAAAMLAQQMQFMFPGTPLHPVPTFPVGPTIGTNAAISFAPYLAPVTPGVGLVPTEVLPTTPVIVPGSPPVTVPGSTATQKLLRTDKLEVCREFQRGNCARGETDCRFAHPADSTMIDTNDNTVTVCMDYIKGRCMREKCKYFHPPAHLQAKIKAAQHQANQAAVAAQAAAAAATVMTQSTAKALKRPLEATVDLAFPPGALHPLPKRQALEKSNGASTVFNPSVLHYQQALTSAQLQQHTAFIPTVPMMHSATSATVSAATTPATSVPFAATATANQIILK.

4 C3H1-type zinc fingers span residues 13 to 41 (WLTLEVCRQYQRGTCSRSDEECKFAHPPK), 47 to 73 (NGRVIACFDSLKGRCSRENCKYLHPPT), 176 to 204 (TDKLEVCREFQRGNCARGETDCRFAHPAD), and 212 to 238 (DNTVTVCMDYIKGRCMREKCKYFHPPA).

It belongs to the muscleblind family. In terms of assembly, interacts with ITGA3.

Its subcellular location is the nucleus. The protein resides in the cytoplasm. Its function is as follows. Mediates pre-mRNA alternative splicing regulation. Acts either as activator or repressor of splicing on specific pre-mRNA targets. Inhibits cardiac troponin-T (TNNT2) pre-mRNA exon inclusion but induces insulin receptor (IR) pre-mRNA exon inclusion in muscle. Antagonizes the alternative splicing activity pattern of CELF proteins. RNA-binding protein that binds to 5'ACACCC-3' core sequence, termed zipcode, within the 3'UTR of ITGA3. Binds to CUG triplet repeat expansion in myotonic dystrophy muscle cells by sequestering the target RNAs. Together with RNA binding proteins RBPMS and RBFOX2, activates vascular smooth muscle cells alternative splicing events. Regulates NCOR2 alternative splicing. Seems to regulate expression and localization of ITGA3 by transporting it from the nucleus to cytoplasm at adhesion plaques. May play a role in myotonic dystrophy pathophysiology (DM). This is Muscleblind-like protein 2 (Mbnl2) from Mus musculus (Mouse).